Reading from the N-terminus, the 318-residue chain is Polyprenal reductase (318 aa).

Over 1 to 11 (MAPWAEAEHSA) the chain is Cytoplasmic. Residues 12–34 (LNPLRAVWLTLTAAFLLTLLLQL) traverse the membrane as a helical segment. Residues 35–80 (LPPGLLPGCAIFQDLIRYGKTKCGEPSRPAACRAFDVPKRYFSHFY) lie on the Lumenal side of the membrane. The chain crosses the membrane as a helical span at residues 81-101 (IISVLWNGFLLWCLTQSLFLG). Over 102–117 (APFPSWLHGLLRILGA) the chain is Cytoplasmic. Residues 118 to 138 (AQFQGGELALSAFLVLVFLWL) form a helical membrane-spanning segment. At 139–157 (HSLRRLFECLYVSVFSNVM) the chain is on the lumenal side. Residues 158-178 (IHVVQYCFGLVYYVLVGLTVL) form a helical membrane-spanning segment. Residues 179-194 (SQVPMDGRNAYITGKN) lie on the Cytoplasmic side of the membrane. A helical membrane pass occupies residues 195–215 (LLMQARWFHILGMMMFIWSSA). Over 216–260 (HQYKCHVILGNLRKNKAGVVIHCNHRIPFGDWFEYVSSPNYLAEL) the chain is Lumenal. Residues 261 to 281 (MIYVSMAVTFGFHNLTWWLVV) traverse the membrane as a helical segment. Over 282 to 318 (TNVFFNQALSAFLSHQFYKSKFVSYPKHRKAFLPFLF) the chain is Cytoplasmic.

Belongs to the steroid 5-alpha reductase family. Polyprenal reductase subfamily. Expressed in preadipocytes (at protein level). Overexpressed in hormone-refractory prostate cancers (HRPC). Almost no or little expression in normal adult organs.

It is found in the endoplasmic reticulum membrane. It carries out the reaction a di-trans,poly-cis-dolichal + NADP(+) = a di-trans,poly-cis-polyprenal + NADPH + H(+). It catalyses the reaction a 3-oxo-5alpha-steroid + NADP(+) = a 3-oxo-Delta(4)-steroid + NADPH + H(+). The enzyme catalyses androst-4-ene-3,17-dione + NADPH + H(+) = 5alpha-androstan-3,17-dione + NADP(+). The catalysed reaction is 17beta-hydroxy-5alpha-androstan-3-one + NADP(+) = testosterone + NADPH + H(+). It functions in the pathway protein modification; protein glycosylation. Its function is as follows. Plays a key role in early steps of protein N-linked glycosylation by being involved in the conversion of polyprenol into dolichol. Acts as a polyprenal reductase that mediates the reduction of polyprenal into dolichal in a NADP-dependent mechanism. Dolichols are required for the synthesis of dolichol-linked monosaccharides and the oligosaccharide precursor used for N-glycosylation. Also able to convert testosterone (T) into 5-alpha-dihydrotestosterone (DHT). The protein is Polyprenal reductase of Homo sapiens (Human).